The chain runs to 177 residues: Large ribosomal subunit protein uL6 (177 aa).

Belongs to the universal ribosomal protein uL6 family. In terms of assembly, part of the 50S ribosomal subunit.

Its function is as follows. This protein binds to the 23S rRNA, and is important in its secondary structure. It is located near the subunit interface in the base of the L7/L12 stalk, and near the tRNA binding site of the peptidyltransferase center. In Bartonella henselae (strain ATCC 49882 / DSM 28221 / CCUG 30454 / Houston 1) (Rochalimaea henselae), this protein is Large ribosomal subunit protein uL6.